The primary structure comprises 321 residues: Glucokinase (321 aa).

8 to 13 (GDVGGT) provides a ligand contact to ATP.

The protein belongs to the bacterial glucokinase family.

The protein localises to the cytoplasm. It carries out the reaction D-glucose + ATP = D-glucose 6-phosphate + ADP + H(+). The chain is Glucokinase from Shigella dysenteriae serotype 1 (strain Sd197).